We begin with the raw amino-acid sequence, 286 residues long: Aminoglycoside N(3)-acetyltransferase III (286 aa).

The protein belongs to the antibiotic N-acetyltransferase family.

The enzyme catalyses a 2-deoxystreptamine antibiotic + acetyl-CoA = an N(3)-acetyl-2-deoxystreptamine antibiotic + CoA + H(+). In terms of biological role, resistance to antibiotics containing the 2-deoxy-streptamine ring including gentamicin, kanamycin, tobramycin, neomycin and apramycin. The sequence is that of Aminoglycoside N(3)-acetyltransferase III (aacC2) from Acinetobacter baumannii.